The primary structure comprises 46 residues: MTKRTLRGSVRKKKRTSGFRARMETPTGRRVIKARRSRGRVRLTTV.

The span at 1-17 (MTKRTLRGSVRKKKRTS) shows a compositional bias: basic residues. Residues 1-26 (MTKRTLRGSVRKKKRTSGFRARMETP) are disordered.

This sequence belongs to the bacterial ribosomal protein bL34 family.

The polypeptide is Large ribosomal subunit protein bL34 (rpmH) (Pseudanabaena sp. (strain PCC 6903)).